The chain runs to 406 residues: MGSPDSSSGSAQKPPRHQHQHQPPPPRRQGSAPELPPGFRFHPTDEELVVHYLKKKAAKAPLPVTIIAEVDLYKFDPWELPEKATFGEHEWYFFSPRDRKYPNGARPNRAATSGYWKATGTDKPILASATGCGREKVGVKKALVFYRGKPPRGLKTNWIMHEYRLTGASAGSTTTSRPPPVTGGSRAPASLRLDDWVLCRIYKKTSKAAAAVGDEQRSMECEDSVEDAVTAYPPYATAGMAGAGAHGSNYVQLLHHHDSHEDNFQLDGLLTEHDVGLSAGAASLGHLAAAARATKQFLAPSSSTPFNWLEASTGGSILPQARNFPGFNRSRNVGSMSLSSTADDMAGAVDVSDGGNAVNAMYLPVQDGTYHQHVILGAPLAPEAIAGAATSGFQHHVQISGVNWNP.

Polar residues predominate over residues 1–11; the sequence is MGSPDSSSGSA. A disordered region spans residues 1–40; the sequence is MGSPDSSSGSAQKPPRHQHQHQPPPPRRQGSAPELPPGFR. Residues 35 to 204 enclose the NAC domain; sequence LPPGFRFHPT…DWVLCRIYKK (170 aa). Residues 137–210 mediate DNA binding; that stretch reads VGVKKALVFY…IYKKTSKAAA (74 aa).

It is found in the nucleus. Its function is as follows. Transcription factor of the NAC family associated with the grain protein content (GPC). Sequences of the 11 European varieties of H.vulgare tested belongs to the same haplotype while the sequence found in H.spontaneum, an ancestor of the cultivated H.vulgare which has a higher GPC, belongs to an other haplotype. The protein is NAC transcription factor NAM-B1 (NAM-B1) of Hordeum vulgare subsp. spontaneum (Wild barley).